A 156-amino-acid polypeptide reads, in one-letter code: ATP synthase subunit b (156 aa).

Residues 7-27 (LIGQTVAFIIFVWFCMKFVWP) form a helical membrane-spanning segment.

The protein belongs to the ATPase B chain family. In terms of assembly, F-type ATPases have 2 components, F(1) - the catalytic core - and F(0) - the membrane proton channel. F(1) has five subunits: alpha(3), beta(3), gamma(1), delta(1), epsilon(1). F(0) has three main subunits: a(1), b(2) and c(10-14). The alpha and beta chains form an alternating ring which encloses part of the gamma chain. F(1) is attached to F(0) by a central stalk formed by the gamma and epsilon chains, while a peripheral stalk is formed by the delta and b chains.

The protein resides in the cell inner membrane. Its function is as follows. F(1)F(0) ATP synthase produces ATP from ADP in the presence of a proton or sodium gradient. F-type ATPases consist of two structural domains, F(1) containing the extramembraneous catalytic core and F(0) containing the membrane proton channel, linked together by a central stalk and a peripheral stalk. During catalysis, ATP synthesis in the catalytic domain of F(1) is coupled via a rotary mechanism of the central stalk subunits to proton translocation. Component of the F(0) channel, it forms part of the peripheral stalk, linking F(1) to F(0). This Shewanella sp. (strain MR-4) protein is ATP synthase subunit b.